Consider the following 260-residue polypeptide: tRNA pseudouridine synthase C (260 aa).

D54 is a catalytic residue.

The protein belongs to the pseudouridine synthase RluA family.

It catalyses the reaction uridine(65) in tRNA = pseudouridine(65) in tRNA. In terms of biological role, responsible for synthesis of pseudouridine from uracil-65 in transfer RNAs. The polypeptide is tRNA pseudouridine synthase C (truC) (Salmonella typhi).